A 468-amino-acid chain; its full sequence is Cysteine--tRNA ligase (468 aa).

Cys33 is a binding site for Zn(2+). A 'HIGH' region motif is present at residues 35–45; that stretch reads ATVQGLPHIGH. Residues Cys211, His236, and Glu240 each coordinate Zn(2+). Positions 267-271 match the 'KMSKS' region motif; the sequence is KMSKS. Lys270 is an ATP binding site.

It belongs to the class-I aminoacyl-tRNA synthetase family. As to quaternary structure, monomer. The cofactor is Zn(2+).

The protein resides in the cytoplasm. It carries out the reaction tRNA(Cys) + L-cysteine + ATP = L-cysteinyl-tRNA(Cys) + AMP + diphosphate. This chain is Cysteine--tRNA ligase, found in Mycobacterium marinum (strain ATCC BAA-535 / M).